The sequence spans 338 residues: Oligopeptide transport ATP-binding protein OppD (338 aa).

Residues 7 to 257 (LEAKQVSVAF…PKHPYTRSLL (251 aa)) form the ABC transporter domain. 43 to 50 (GESGSGKS) serves as a coordination point for ATP.

It belongs to the ABC transporter superfamily. The complex is composed of two ATP-binding proteins (OppD and OppF), two transmembrane proteins (OppB and OppC) and a solute-binding protein (OppA).

It is found in the cell membrane. The catalysed reaction is a [peptide](out) + ATP + H2O = a [peptide](in) + ADP + phosphate + H(+). In terms of biological role, part of the ABC transporter complex OppABCDF involved in the uptake of oligopeptides. Probably responsible for energy coupling to the transport system. Essential for uptake of peptides larger than three amino acids and for growth in milk. This is Oligopeptide transport ATP-binding protein OppD from Lactococcus lactis subsp. cremoris (strain SK11).